A 213-amino-acid polypeptide reads, in one-letter code: Orotate phosphoribosyltransferase (213 aa).

Lysine 26 serves as a coordination point for 5-phospho-alpha-D-ribose 1-diphosphate. Residue 34 to 35 (FF) participates in orotate binding. 5-phospho-alpha-D-ribose 1-diphosphate contacts are provided by residues 72–73 (YK), arginine 99, lysine 100, lysine 103, histidine 105, and 124–132 (DDVITAGTA). Residues threonine 128 and arginine 156 each contribute to the orotate site.

This sequence belongs to the purine/pyrimidine phosphoribosyltransferase family. PyrE subfamily. Homodimer. It depends on Mg(2+) as a cofactor.

The enzyme catalyses orotidine 5'-phosphate + diphosphate = orotate + 5-phospho-alpha-D-ribose 1-diphosphate. The protein operates within pyrimidine metabolism; UMP biosynthesis via de novo pathway; UMP from orotate: step 1/2. In terms of biological role, catalyzes the transfer of a ribosyl phosphate group from 5-phosphoribose 1-diphosphate to orotate, leading to the formation of orotidine monophosphate (OMP). The protein is Orotate phosphoribosyltransferase of Pseudomonas putida (strain GB-1).